The following is a 505-amino-acid chain: Peroxisome proliferator-activated receptor gamma (505 aa).

Positions 1-26 are disordered; the sequence is MGETLGDSLIDPESDSFADTLSASTS. The segment covering 17-26 has biased composition (polar residues); it reads FADTLSASTS. At Ser-112 the chain carries Phosphoserine; by MAPK. A DNA-binding region (nuclear receptor) is located at residues 136 to 210; the sequence is AIECRVCGDK…VGMSHNAIRF (75 aa). 2 consecutive NR C4-type zinc fingers follow at residues 139 to 159 and 176 to 198; these read CRVC…CEGC and CDLN…FQKC. The interaction with FAM120B stretch occupies residues 205–280; that stretch reads HNAIRFGRMP…DKSPFVIYDM (76 aa). The 266-residue stretch at 238–503 folds into the NR LBD domain; the sequence is DLRALAKHLY…HPLLQEIYKD (266 aa). Residue Lys-252 forms a Glycyl lysine isopeptide (Lys-Gly) (interchain with G-Cter in ubiquitin) linkage. The 9aaTAD motif lies at 495-503; it reads PLLQEIYKD.

The protein belongs to the nuclear hormone receptor family. NR1 subfamily. As to quaternary structure, interacts with FOXO1 (acetylated form). Heterodimer with other nuclear receptors, such as RXRA. The heterodimer with the retinoic acid receptor RXRA is called adipocyte-specific transcription factor ARF6. Interacts with NCOA6 coactivator, leading to a strong increase in transcription of target genes. Interacts with coactivator PPARBP, leading to a mild increase in transcription of target genes. Interacts with NOCA7 in a ligand-inducible manner. Interacts with NCOA1 and NCOA2 LXXLL motifs. Interacts with ASXL1, ASXL2, DNTTIP2, FAM120B, MAP2K1/MEK1, NR0B2, PDPK1, PRDM16, PRMT2 and TGFB1I1. Interacts (when activated by agonist) with PPP5C. Interacts with HELZ2 and THRAP3; the interaction stimulates the transcriptional activity of PPARG. Interacts with PER2, the interaction is ligand dependent and blocks PPARG recruitment to target promoters. Interacts with NOCT. Interacts with ACTN4. Interacts (when in the liganded conformation) with GPS2. Interacts with CRY1 and CRY2 in a ligand-dependent manner. In the absence of hormonal ligand, interacts with TACC1. In macrophages, interacts with PAQR3 and STUB1; the interactions promote PPARG poylubiquitination and STUB1-mediated degradation. Post-translationally, phosphorylated at basal conditions and dephosphorylated when treated with the ligand. May be dephosphorylated by PPP5C. The phosphorylated form may be inactive and dephosphorylation induces adipogenic activity. In terms of processing, ubiquitinated by E3 ubiquitin-protein ligase complex containing FBXO9; leading to proteasomal degradation. Ubiquitinated at Lys-252 by TRIM55 leading to proteasomal degradation. Ubiquitinated by E3 ubiquitin-protein ligase STUB1/CHIP; leading to proteasomal degradation.

The protein localises to the nucleus. Its subcellular location is the cytoplasm. With respect to regulation, PDPK1 activates its transcriptional activity independently of its kinase activity. Its function is as follows. Nuclear receptor that binds peroxisome proliferators such as hypolipidemic drugs and fatty acids. Once activated by a ligand, the nuclear receptor binds to DNA specific PPAR response elements (PPRE) and modulates the transcription of its target genes, such as acyl-CoA oxidase. It therefore controls the peroxisomal beta-oxidation pathway of fatty acids. Key regulator of adipocyte differentiation and glucose homeostasis. ARF6 acts as a key regulator of the tissue-specific adipocyte P2 (aP2) enhancer. Acts as a critical regulator of gut homeostasis by suppressing NF-kappa-B-mediated pro-inflammatory responses. Plays a role in the regulation of cardiovascular circadian rhythms by regulating the transcription of BMAL1 in the blood vessels. The sequence is that of Peroxisome proliferator-activated receptor gamma (PPARG) from Canis lupus familiaris (Dog).